A 164-amino-acid chain; its full sequence is UPF0114 protein Avin_40830 (164 aa).

4 helical membrane passes run 15-35 (LLAP…LKFF), 53-73 (LILV…LVMV), 103-125 (GSLK…LRVF), and 136-156 (LLWY…MSYL).

It belongs to the UPF0114 family.

Its subcellular location is the cell membrane. The polypeptide is UPF0114 protein Avin_40830 (Azotobacter vinelandii (strain DJ / ATCC BAA-1303)).